Here is a 38-residue protein sequence, read N- to C-terminus: Large ribosomal subunit protein bL36 (38 aa).

The protein belongs to the bacterial ribosomal protein bL36 family.

This chain is Large ribosomal subunit protein bL36, found in Lactobacillus acidophilus (strain ATCC 700396 / NCK56 / N2 / NCFM).